The chain runs to 506 residues: Steroid (22S)-hydroxylase (506 aa).

A helical membrane pass occupies residues 12-32; sequence LLFFLPFILLALLTFYTTTVA. Cys449 lines the heme pocket.

Belongs to the cytochrome P450 family. Requires heme as cofactor.

The protein resides in the membrane. It catalyses the reaction a C28-steroid + reduced [NADPH--hemoprotein reductase] + O2 = a (22S)-22-hydroxy C28-steroid + oxidized [NADPH--hemoprotein reductase] + H2O + H(+). The enzyme catalyses campesterol + reduced [NADPH--hemoprotein reductase] + O2 = (22S)-22-hydroxycampesterol + oxidized [NADPH--hemoprotein reductase] + H2O + H(+). It carries out the reaction campestanol + reduced [NADPH--hemoprotein reductase] + O2 = 6-deoxycathasterone + oxidized [NADPH--hemoprotein reductase] + H2O + H(+). The protein operates within plant hormone biosynthesis; brassinosteroid biosynthesis. In terms of biological role, catalyzes the C22-alpha-hydroxylation step in brassinosteroid biosynthesis, which is the rate-limiting step in this biosynthetic pathway. Catalyzes the conversion of campesterol (CR) to (22S)-22-hydroxycampesterol (22-OHCR, 22-hydroxyCR) and of campestanol (CN) to 6-deoxocathasterone (6-deoxoCT). The polypeptide is Steroid (22S)-hydroxylase (Oryza sativa subsp. indica (Rice)).